The sequence spans 644 residues: Acetolactate synthase 1, chloroplastic (644 aa).

A chloroplast-targeting transit peptide spans 1–43 (MATTAAAAAAALSAAATAKTGRKNHQRHHVLPARGRVGAAAVR). A disordered region spans residues 47–67 (VSPVTPPSPAPPATPLRPWGP). A compositionally biased stretch (pro residues) spans 50-61 (VTPPSPAPPATP). Glu118 provides a ligand contact to thiamine diphosphate. A disulfide bridge connects residues Cys138 and Cys284. FAD is bound by residues Arg220, 326-347 (HGTV…FGVR), and 369-388 (DIDP…ICAD). The segment at 461–541 (QHQMWAAQYY…VKVMVLNNQH (81 aa)) is thiamine pyrophosphate binding. Positions 512 and 539 each coordinate Mg(2+).

This sequence belongs to the TPP enzyme family. Mg(2+) serves as cofactor. Thiamine diphosphate is required as a cofactor.

Its subcellular location is the plastid. It is found in the chloroplast. The enzyme catalyses 2 pyruvate + H(+) = (2S)-2-acetolactate + CO2. The protein operates within amino-acid biosynthesis; L-isoleucine biosynthesis; L-isoleucine from 2-oxobutanoate: step 1/4. It participates in amino-acid biosynthesis; L-valine biosynthesis; L-valine from pyruvate: step 1/4. This chain is Acetolactate synthase 1, chloroplastic (ALS1), found in Oryza sativa subsp. japonica (Rice).